A 379-amino-acid chain; its full sequence is Cytochrome b (379 aa).

A run of 4 helical transmembrane segments spans residues 33-53 (FGSLLGICLILQIITGLFLAM), 77-98 (WMIRYMHANGASMFFICLFIHI), 113-133 (WNIGVILLFTTMATAFMGYVL), and 178-198 (FFAFHFILPFIIMALAAVHLL). 2 residues coordinate heme b: His83 and His97. Positions 182 and 196 each coordinate heme b. His201 is an a ubiquinone binding site. A run of 4 helical transmembrane segments spans residues 226 to 246 (MKDIMGFLTMFLALLTLVLFY), 288 to 308 (LGGVVALMLSILILIFLPMMH), 320 to 340 (LSQCMFWILVANLLTLTWIGG), and 347 to 367 (FIMIGQLASLSYFLIILIIMP).

It belongs to the cytochrome b family. The cytochrome bc1 complex contains 11 subunits: 3 respiratory subunits (MT-CYB, CYC1 and UQCRFS1), 2 core proteins (UQCRC1 and UQCRC2) and 6 low-molecular weight proteins (UQCRH/QCR6, UQCRB/QCR7, UQCRQ/QCR8, UQCR10/QCR9, UQCR11/QCR10 and a cleavage product of UQCRFS1). This cytochrome bc1 complex then forms a dimer. Requires heme b as cofactor.

It localises to the mitochondrion inner membrane. Functionally, component of the ubiquinol-cytochrome c reductase complex (complex III or cytochrome b-c1 complex) that is part of the mitochondrial respiratory chain. The b-c1 complex mediates electron transfer from ubiquinol to cytochrome c. Contributes to the generation of a proton gradient across the mitochondrial membrane that is then used for ATP synthesis. The sequence is that of Cytochrome b (MT-CYB) from Massoutiera mzabi (Mzab gundi).